Consider the following 624-residue polypeptide: tRNA uridine 5-carboxymethylaminomethyl modification enzyme MnmG (624 aa).

Residues 14–19 (GGGHAG), Val126, and Ser181 contribute to the FAD site. 273 to 287 (GPRYCPSIEDKVVRF) lines the NAD(+) pocket. Position 370 (Gln370) interacts with FAD.

This sequence belongs to the MnmG family. As to quaternary structure, homodimer. Heterotetramer of two MnmE and two MnmG subunits. It depends on FAD as a cofactor.

It localises to the cytoplasm. Functionally, NAD-binding protein involved in the addition of a carboxymethylaminomethyl (cmnm) group at the wobble position (U34) of certain tRNAs, forming tRNA-cmnm(5)s(2)U34. This Geotalea uraniireducens (strain Rf4) (Geobacter uraniireducens) protein is tRNA uridine 5-carboxymethylaminomethyl modification enzyme MnmG.